The following is a 406-amino-acid chain: Peptidase T (406 aa).

H80 lines the Zn(2+) pocket. D82 is a catalytic residue. D141 is a binding site for Zn(2+). The active-site Proton acceptor is E175. Positions 176, 198, and 380 each coordinate Zn(2+).

It belongs to the peptidase M20B family. Requires Zn(2+) as cofactor.

Its subcellular location is the cytoplasm. The catalysed reaction is Release of the N-terminal residue from a tripeptide.. Functionally, cleaves the N-terminal amino acid of tripeptides. The sequence is that of Peptidase T from Streptococcus mutans serotype c (strain ATCC 700610 / UA159).